The following is a 210-amino-acid chain: N-(5'-phosphoribosyl)anthranilate isomerase (210 aa).

The protein belongs to the TrpF family.

It carries out the reaction N-(5-phospho-beta-D-ribosyl)anthranilate = 1-(2-carboxyphenylamino)-1-deoxy-D-ribulose 5-phosphate. The protein operates within amino-acid biosynthesis; L-tryptophan biosynthesis; L-tryptophan from chorismate: step 3/5. This chain is N-(5'-phosphoribosyl)anthranilate isomerase, found in Staphylococcus aureus (strain bovine RF122 / ET3-1).